The sequence spans 121 residues: Small ribosomal subunit protein uS13 (121 aa).

Positions 93 to 121 (RKGLPVRGQKTKTNARTRKGKRKTVGAKS) are disordered.

It belongs to the universal ribosomal protein uS13 family. Part of the 30S ribosomal subunit. Forms a loose heterodimer with protein S19. Forms two bridges to the 50S subunit in the 70S ribosome.

In terms of biological role, located at the top of the head of the 30S subunit, it contacts several helices of the 16S rRNA. In the 70S ribosome it contacts the 23S rRNA (bridge B1a) and protein L5 of the 50S subunit (bridge B1b), connecting the 2 subunits; these bridges are implicated in subunit movement. Contacts the tRNAs in the A and P-sites. The protein is Small ribosomal subunit protein uS13 of Campylobacter lari (strain RM2100 / D67 / ATCC BAA-1060).